The sequence spans 139 residues: Nucleoside diphosphate kinase (139 aa).

Lys10, Phe58, Arg86, Thr92, Arg104, and Asn114 together coordinate ATP. His117 acts as the Pros-phosphohistidine intermediate in catalysis.

The protein belongs to the NDK family. As to quaternary structure, homotetramer. The cofactor is Mg(2+).

The protein localises to the cytoplasm. It catalyses the reaction a 2'-deoxyribonucleoside 5'-diphosphate + ATP = a 2'-deoxyribonucleoside 5'-triphosphate + ADP. It carries out the reaction a ribonucleoside 5'-diphosphate + ATP = a ribonucleoside 5'-triphosphate + ADP. In terms of biological role, major role in the synthesis of nucleoside triphosphates other than ATP. The ATP gamma phosphate is transferred to the NDP beta phosphate via a ping-pong mechanism, using a phosphorylated active-site intermediate. This is Nucleoside diphosphate kinase from Rhodococcus opacus (strain B4).